Consider the following 758-residue polypeptide: Phosphoribosylformylglycinamidine synthase subunit PurL (758 aa).

His57 is an active-site residue. Residues Tyr60 and Arg104 each contribute to the ATP site. Residue Glu106 participates in Mg(2+) binding. Residues 107 to 110 (SHNH) and Arg129 contribute to the substrate site. Catalysis depends on His108, which acts as the Proton acceptor. Asp130 serves as a coordination point for Mg(2+). Residue Gln254 participates in substrate binding. A Mg(2+)-binding site is contributed by Asp282. Substrate is bound at residue 326–328 (ESQ). Positions 509 and 546 each coordinate ATP. Asn547 lines the Mg(2+) pocket. Residue Ser549 coordinates substrate.

It belongs to the FGAMS family. Monomer. Part of the FGAM synthase complex composed of 1 PurL, 1 PurQ and 2 PurS subunits.

Its subcellular location is the cytoplasm. It catalyses the reaction N(2)-formyl-N(1)-(5-phospho-beta-D-ribosyl)glycinamide + L-glutamine + ATP + H2O = 2-formamido-N(1)-(5-O-phospho-beta-D-ribosyl)acetamidine + L-glutamate + ADP + phosphate + H(+). Its pathway is purine metabolism; IMP biosynthesis via de novo pathway; 5-amino-1-(5-phospho-D-ribosyl)imidazole from N(2)-formyl-N(1)-(5-phospho-D-ribosyl)glycinamide: step 1/2. Its function is as follows. Part of the phosphoribosylformylglycinamidine synthase complex involved in the purines biosynthetic pathway. Catalyzes the ATP-dependent conversion of formylglycinamide ribonucleotide (FGAR) and glutamine to yield formylglycinamidine ribonucleotide (FGAM) and glutamate. The FGAM synthase complex is composed of three subunits. PurQ produces an ammonia molecule by converting glutamine to glutamate. PurL transfers the ammonia molecule to FGAR to form FGAM in an ATP-dependent manner. PurS interacts with PurQ and PurL and is thought to assist in the transfer of the ammonia molecule from PurQ to PurL. The chain is Phosphoribosylformylglycinamidine synthase subunit PurL from Corynebacterium ammoniagenes (Brevibacterium ammoniagenes).